The primary structure comprises 284 residues: Bifunctional protein FolD (284 aa).

Residues 165 to 167 and S190 each bind NADP(+); that span reads GRS.

Belongs to the tetrahydrofolate dehydrogenase/cyclohydrolase family. As to quaternary structure, homodimer.

The catalysed reaction is (6R)-5,10-methylene-5,6,7,8-tetrahydrofolate + NADP(+) = (6R)-5,10-methenyltetrahydrofolate + NADPH. The enzyme catalyses (6R)-5,10-methenyltetrahydrofolate + H2O = (6R)-10-formyltetrahydrofolate + H(+). It functions in the pathway one-carbon metabolism; tetrahydrofolate interconversion. In terms of biological role, catalyzes the oxidation of 5,10-methylenetetrahydrofolate to 5,10-methenyltetrahydrofolate and then the hydrolysis of 5,10-methenyltetrahydrofolate to 10-formyltetrahydrofolate. This chain is Bifunctional protein FolD, found in Streptococcus mutans serotype c (strain ATCC 700610 / UA159).